A 1140-amino-acid chain; its full sequence is Centrosomal protein of 135 kDa (1140 aa).

Residues 11–64 (NIRKRLDQLGYRQTLSVDSLPLVEKLFSDLVHTTESLRQCRLSSGKAEKESANL) form a homodimerization region. Coiled coils occupy residues 75–151 (NTRL…KNLR) and 199–416 (LQVA…FAVT). Position 439 is a phosphoserine (Ser439). Coiled coils occupy residues 447-644 (LKGI…LENK), 668-1036 (SLRI…LESL), and 1079-1113 (TSML…AIQE). Ser688 is modified (phosphoserine). A compositionally biased stretch (low complexity) spans 1117-1131 (LGLPTSPLSSTLKSP). Positions 1117 to 1140 (LGLPTSPLSSTLKSPVQTPDHINA) are disordered. Residue Thr1121 is modified to Phosphothreonine. Ser1130 carries the post-translational modification Phosphoserine. Residue Thr1134 is modified to Phosphothreonine.

This sequence belongs to the CEP135/TSGA10 family. As to quaternary structure, homodimer. Interacts with CEP250. Interacts with DCTN2.

It is found in the cytoplasm. Its subcellular location is the cytoskeleton. The protein resides in the microtubule organizing center. It localises to the centrosome. The protein localises to the centriole. Centrosomal microtubule-binding protein involved in centriole biogenesis. Acts as a scaffolding protein during early centriole biogenesis. Required for the targeting of centriole satellite proteins to centrosomes such as of PCM1, SSX2IP and CEP290 and recruitment of WRAP73 to centrioles. Also required for centriole-centriole cohesion during interphase by acting as a platform protein for CEP250 at the centriole. Required for the recruitment of CEP295 to the proximal end of new-born centrioles at the centriolar microtubule wall during early S phase in a PLK4-dependent manner. The polypeptide is Centrosomal protein of 135 kDa (Cep135) (Mus musculus (Mouse)).